We begin with the raw amino-acid sequence, 304 residues long: Uricase (304 aa).

Position 2 is an N-acetylalanine (Ala-2). An N6-acetyllysine; alternate mark is found at Lys-10 and Lys-23. An N6-succinyllysine; alternate mark is found at Lys-10 and Lys-23. The active-site Charge relay system is Lys-23. Residues Lys-27 and Lys-36 each carry the N6-acetyllysine modification. 2 positions are modified to phosphoserine: Ser-39 and Ser-63. The active-site Charge relay system is Thr-68. Residues Thr-68 and Asp-69 each coordinate urate. N6-acetyllysine occurs at positions 118, 122, and 164. Position 170 (Phe-170) interacts with urate. 2 positions are modified to N6-acetyllysine: Lys-175 and Lys-185. Arg-187 is a urate binding site. An N6-acetyllysine; alternate mark is found at Lys-221 and Lys-228. Lys-221 and Lys-228 each carry N6-succinyllysine; alternate. Residue Ser-232 is modified to Phosphoserine. Urate is bound by residues Val-235, Gln-236, and Asn-262. The Charge relay system role is filled by His-264. Lys-278 carries the post-translational modification N6-acetyllysine. A Phosphotyrosine modification is found at Tyr-289. Positions 302–304 match the Microbody targeting signal motif; that stretch reads SRL.

It belongs to the uricase family. Homotetramer.

The protein resides in the peroxisome. The enzyme catalyses urate + O2 + H2O = 5-hydroxyisourate + H2O2. It participates in purine metabolism; urate degradation; (S)-allantoin from urate: step 1/3. In terms of biological role, catalyzes the oxidation of uric acid to 5-hydroxyisourate, which is further processed to form (S)-allantoin. The sequence is that of Uricase (UOX) from Sus scrofa (Pig).